We begin with the raw amino-acid sequence, 201 residues long: ATP-dependent Clp protease proteolytic subunit (201 aa).

Catalysis depends on Ser101, which acts as the Nucleophile. His126 is an active-site residue.

It belongs to the peptidase S14 family. Fourteen ClpP subunits assemble into 2 heptameric rings which stack back to back to give a disk-like structure with a central cavity, resembling the structure of eukaryotic proteasomes.

It is found in the cytoplasm. It carries out the reaction Hydrolysis of proteins to small peptides in the presence of ATP and magnesium. alpha-casein is the usual test substrate. In the absence of ATP, only oligopeptides shorter than five residues are hydrolyzed (such as succinyl-Leu-Tyr-|-NHMec, and Leu-Tyr-Leu-|-Tyr-Trp, in which cleavage of the -Tyr-|-Leu- and -Tyr-|-Trp bonds also occurs).. In terms of biological role, cleaves peptides in various proteins in a process that requires ATP hydrolysis. Has a chymotrypsin-like activity. Plays a major role in the degradation of misfolded proteins. The chain is ATP-dependent Clp protease proteolytic subunit from Francisella philomiragia subsp. philomiragia (strain ATCC 25017 / CCUG 19701 / FSC 153 / O#319-036).